The chain runs to 316 residues: Na(+)-translocating NADH-quinone reductase subunit C (316 aa).

The helical transmembrane segment at Trp13–Val33 threads the bilayer. Thr280 bears the FMN phosphoryl threonine mark.

This sequence belongs to the NqrC family. Composed of six subunits; NqrA, NqrB, NqrC, NqrD, NqrE and NqrF. FMN is required as a cofactor.

The protein resides in the cell inner membrane. It carries out the reaction a ubiquinone + n Na(+)(in) + NADH + H(+) = a ubiquinol + n Na(+)(out) + NAD(+). NQR complex catalyzes the reduction of ubiquinone-1 to ubiquinol by two successive reactions, coupled with the transport of Na(+) ions from the cytoplasm to the periplasm. NqrA to NqrE are probably involved in the second step, the conversion of ubisemiquinone to ubiquinol. The protein is Na(+)-translocating NADH-quinone reductase subunit C of Chlamydia trachomatis serovar D (strain ATCC VR-885 / DSM 19411 / UW-3/Cx).